The following is a 447-amino-acid chain: N-succinylarginine dihydrolase (447 aa).

Residues 19–28 (AGLSFGNEAS), N110, and 137–138 (HR) contribute to the substrate site. E174 is a catalytic residue. R212 serves as a coordination point for substrate. H248 is a catalytic residue. Substrate is bound by residues D250 and N359. C365 functions as the Nucleophile in the catalytic mechanism.

Belongs to the succinylarginine dihydrolase family. Homodimer.

It carries out the reaction N(2)-succinyl-L-arginine + 2 H2O + 2 H(+) = N(2)-succinyl-L-ornithine + 2 NH4(+) + CO2. It participates in amino-acid degradation; L-arginine degradation via AST pathway; L-glutamate and succinate from L-arginine: step 2/5. In terms of biological role, catalyzes the hydrolysis of N(2)-succinylarginine into N(2)-succinylornithine, ammonia and CO(2). The sequence is that of N-succinylarginine dihydrolase from Escherichia coli (strain K12 / MC4100 / BW2952).